The chain runs to 373 residues: Filamin-binding LIM protein 1 (373 aa).

Residues 1-70 (MASKPEKRVA…SPWTTPGRAA (70 aa)) are filamin-binding. 2 disordered regions span residues 41 to 119 (RPWE…PSEE) and 135 to 176 (QLHL…PVEK). Positions 104-114 (LPPPPPPPPVL) are enriched in pro residues. LIM zinc-binding domains lie at 181–242 (DICA…TLER), 243–300 (CGKC…RKFA), and 301–370 (PVCS…RSAA). The interval 276 to 373 (IGDESFALGS…HVKRSAAGCC (98 aa)) is FERMT2-binding.

In terms of assembly, interacts with NKX2-5. Isoform 1 and isoform 3 interact with FERMT2, FLNA, FLNB and FLNC. Isoform 2 interacts with FLNB. Isoform 1 and isoform 3 are expressed in heart, kidney, lung, pancreas, placenta and platelets. Isoform 2 is expressed in brain, heart, kidney, lung, pancreas, placenta, skeletal muscle and platelets.

The protein resides in the cell junction. The protein localises to the focal adhesion. Its subcellular location is the cytoplasm. It is found in the cytoskeleton. It localises to the stress fiber. In terms of biological role, serves as an anchoring site for cell-ECM adhesion proteins and filamin-containing actin filaments. Is implicated in cell shape modulation (spreading) and motility. May participate in the regulation of filamin-mediated cross-linking and stabilization of actin filaments. May also regulate the assembly of filamin-containing signaling complexes that control actin assembly. Promotes dissociation of FLNA from ITGB3 and ITGB7. Promotes activation of integrins and regulates integrin-mediated cell-cell adhesion. The protein is Filamin-binding LIM protein 1 (FBLIM1) of Homo sapiens (Human).